Here is a 239-residue protein sequence, read N- to C-terminus: Ribonuclease PH (239 aa).

Phosphate contacts are provided by residues Arg86 and 124-126 (GTR).

Belongs to the RNase PH family. As to quaternary structure, homohexameric ring arranged as a trimer of dimers.

The catalysed reaction is tRNA(n+1) + phosphate = tRNA(n) + a ribonucleoside 5'-diphosphate. Its function is as follows. Phosphorolytic 3'-5' exoribonuclease that plays an important role in tRNA 3'-end maturation. Removes nucleotide residues following the 3'-CCA terminus of tRNAs; can also add nucleotides to the ends of RNA molecules by using nucleoside diphosphates as substrates, but this may not be physiologically important. Probably plays a role in initiation of 16S rRNA degradation (leading to ribosome degradation) during starvation. The protein is Ribonuclease PH of Sinorhizobium medicae (strain WSM419) (Ensifer medicae).